A 316-amino-acid chain; its full sequence is 4-hydroxy-3-methylbut-2-enyl diphosphate reductase (316 aa).

Residue Cys-12 coordinates [4Fe-4S] cluster. Positions 43 and 81 each coordinate (2E)-4-hydroxy-3-methylbut-2-enyl diphosphate. Residues His-43 and His-81 each coordinate dimethylallyl diphosphate. The isopentenyl diphosphate site is built by His-43 and His-81. Cys-103 is a [4Fe-4S] cluster binding site. His-131 provides a ligand contact to (2E)-4-hydroxy-3-methylbut-2-enyl diphosphate. His-131 is a binding site for dimethylallyl diphosphate. His-131 contributes to the isopentenyl diphosphate binding site. Glu-133 serves as the catalytic Proton donor. Thr-170 contributes to the (2E)-4-hydroxy-3-methylbut-2-enyl diphosphate binding site. Residue Cys-198 participates in [4Fe-4S] cluster binding. Positions 226, 228, and 271 each coordinate (2E)-4-hydroxy-3-methylbut-2-enyl diphosphate. Dimethylallyl diphosphate is bound by residues Ser-226, Asn-228, and Ser-271. The isopentenyl diphosphate site is built by Ser-226, Asn-228, and Ser-271.

Belongs to the IspH family. Requires [4Fe-4S] cluster as cofactor.

It carries out the reaction isopentenyl diphosphate + 2 oxidized [2Fe-2S]-[ferredoxin] + H2O = (2E)-4-hydroxy-3-methylbut-2-enyl diphosphate + 2 reduced [2Fe-2S]-[ferredoxin] + 2 H(+). It catalyses the reaction dimethylallyl diphosphate + 2 oxidized [2Fe-2S]-[ferredoxin] + H2O = (2E)-4-hydroxy-3-methylbut-2-enyl diphosphate + 2 reduced [2Fe-2S]-[ferredoxin] + 2 H(+). It functions in the pathway isoprenoid biosynthesis; dimethylallyl diphosphate biosynthesis; dimethylallyl diphosphate from (2E)-4-hydroxy-3-methylbutenyl diphosphate: step 1/1. Its pathway is isoprenoid biosynthesis; isopentenyl diphosphate biosynthesis via DXP pathway; isopentenyl diphosphate from 1-deoxy-D-xylulose 5-phosphate: step 6/6. Its function is as follows. Catalyzes the conversion of 1-hydroxy-2-methyl-2-(E)-butenyl 4-diphosphate (HMBPP) into a mixture of isopentenyl diphosphate (IPP) and dimethylallyl diphosphate (DMAPP). Acts in the terminal step of the DOXP/MEP pathway for isoprenoid precursor biosynthesis. This chain is 4-hydroxy-3-methylbut-2-enyl diphosphate reductase, found in Bacillus cereus (strain B4264).